The chain runs to 112 residues: Colipase (112 aa).

Positions 1–17 are cleaved as a signal peptide; it reads MEKVLILLLVALAVAYA. The propeptide at 18 to 22 is enterostatin, activation peptide; that stretch reads VPDPR. 5 disulfide bridges follow: C34/C45, C40/C56, C44/C78, C66/C86, and C80/C104.

This sequence belongs to the colipase family. In terms of assembly, forms a 1:1 stoichiometric complex with pancreatic lipase.

The protein resides in the secreted. In terms of biological role, colipase is a cofactor of pancreatic lipase. It allows the lipase to anchor itself to the lipid-water interface. Without colipase the enzyme is washed off by bile salts, which have an inhibitory effect on the lipase. Its function is as follows. Enterostatin has a biological activity as a satiety signal. In Bos taurus (Bovine), this protein is Colipase (CLPS).